A 197-amino-acid polypeptide reads, in one-letter code: Double homeobox protein 5 (197 aa).

DNA-binding regions (homeobox) lie at residues 46-105 and 121-180; these read GRRM…LRQH and GRRK…RGQS. The tract at residues 101 to 127 is disordered; that stretch reads QLRQHRRQSRPWPGRRDPQKGRRKRTA.

Belongs to the paired homeobox family. Expressed in hepatoma Hep3B cells.

It is found in the nucleus. This Homo sapiens (Human) protein is Double homeobox protein 5 (DUX5).